Reading from the N-terminus, the 502-residue chain is Bone morphogenetic protein receptor type-1B (502 aa).

The N-terminal stretch at methionine 1–threonine 13 is a signal peptide. A disordered region spans residues methionine 1–threonine 24. The Extracellular segment spans residues lysine 14–lysine 126. Cystine bridges form between cysteine 32/cysteine 53, cysteine 34/cysteine 38, cysteine 47/cysteine 71, cysteine 81/cysteine 95, and cysteine 96/cysteine 102. The chain crosses the membrane as a helical span at residues alanine 127 to phenylalanine 148. Over arginine 149–leucine 502 the chain is Cytoplasmic. The region spanning glutamate 174 to glutamine 203 is the GS domain. The 291-residue stretch at isoleucine 204 to methionine 494 folds into the Protein kinase domain. ATP-binding positions include isoleucine 210 to valine 218 and lysine 231. Aspartate 332 functions as the Proton acceptor in the catalytic mechanism.

Belongs to the protein kinase superfamily. TKL Ser/Thr protein kinase family. TGFB receptor subfamily. As to quaternary structure, interacts with high affinity with GDF5; positively regulates chondrocyte differentiation. Interacts with SCUBE3. Interacts with TSC22D1/TSC-22. Interacts with TGFBR3. It depends on Mg(2+) as a cofactor. The cofactor is Mn(2+). Post-translationally, autophosphorylated.

Its subcellular location is the cell membrane. It carries out the reaction L-threonyl-[receptor-protein] + ATP = O-phospho-L-threonyl-[receptor-protein] + ADP + H(+). The enzyme catalyses L-seryl-[receptor-protein] + ATP = O-phospho-L-seryl-[receptor-protein] + ADP + H(+). Functionally, on ligand binding, forms a receptor complex consisting of two type II and two type I transmembrane serine/threonine kinases. Type II receptors phosphorylate and activate type I receptors which autophosphorylate, then bind and activate SMAD transcriptional regulators. Receptor for BMP7/OP-1. Receptor for GDF5. Positively regulates chondrocyte differentiation through GDF5 interaction. This is Bone morphogenetic protein receptor type-1B (Bmpr1b) from Mus musculus (Mouse).